The primary structure comprises 1381 residues: MKAPAVLAPGILVLLFTLVQKSDGECKEALVKSEMNVNMKYQLPNFTAETPIQNVVLHKHHIYLGATNYIYVLNDKDLQKVAEYKTGPVLEHPDCFPCQDCSRKANLSGGAWKDNINMALLVDTYYDDQLISCGSVHRGTCQRHVLPLNNVADIQSEVYCMYSPQAEEPHQCPDCVVSALGTKVLLSEKDRFVTFFVGNTINSSYLPDHSLHSISVRRLKETQDGFKFLTDQSYIDVLPEFRDSYPIKYIHAFESNHFIYFLTVQRETLDAQTFHTRIIRFCSVDSGLHSYMEMPLECILTEKRRKRSTSEEVFNILQAAYVSKPGAHLAKQIGANLNDDILYGVFAQSKPDSAEPMNRSAVCAFPVKYVNEFFNKIVNKNNVRCLQHFYGPHHEHCFNRTLLRNSSGCEVRNDEYRTEFTTALQRVDLFMGQFNQVLLTSISTFIKGNLTIANLGTSEGRFMQVVVSRSGSSTPHVNFHLDSHPVSPEVIVEHPLNQNGYTLVVTGKKITKIPLNGLGCEHFQSCSQCLSAPPFVQCGWCHDKCVRLEECHNGTWTQEICLPTIYKVFPTSAPLEGGTTLTVCGWDFGFRKNNKLDSKKTKVLLGNESCTLTLSESTSNTLKCTVGPAMNERFNISITVSNSRGTARYSTFSYVDPIITSISPSYGPKTGGTLLTLTGKYLNSGNSRHISIGGKTCTLKSVSDSILECYTPAQTTPTEFPVKLKIDLANREMNSFSYREDPIVYEIHPTKSFISGGSTITGVGKNLNSVSVLRMVINVREAGRNFTVACQHRSNSEIICCTTPSLQQLNLQLPLKTKAFFMLDGIHSKYFDLIYVHNPVFKPFEKPVMISIGNENVLEIKGNDIDPEAVKGEVLKVGNKSCENIHSHSEAVLCTVPSDLLKLNSELNIEWKQAVSSTILGKVIVQPDQNFTGLIVGVVSISIILLLLLGLFLWLKRRKQIKDLGSELVRYDARVHTPHLDRLVSARSVSPTTEMVSNESVDYRATFPEDQFPNSSQNGSCRQVQYPLTDLSPILTSGDSDISSPLLQNTVHIDLSALNPELVQAVQHVVIGPSSLIVHFNEVIGRGHFGCVYHGTLLDNDDKKIHCAVKSLNRITDIGEVSQFLTEGIIMKDFSHPNVLSLLGICLRSEGSPLVVLPYMKHGDLRNFIRNETHNPTVKDLIGFGLQVAKGMKYLASKKFVHRDLAARNCMLDEKFTVKVADFGLARDMYDKEYYSVHNKTGAKLPVKWMALESLQTQKFTTKSDVWSFGVLLWELMTRGAPPYPDVNTFDITVYLLQGRRLLQPEYCPDPLYEVMLKCWHPKAELRPSFSELVSRISAIFSTFIGEHYVHVNATYVNVKCVAPYPSLLSSQDNVDGEVDT.

Residues M1–G24 form the signal peptide. The Extracellular portion of the chain corresponds to E25–L934. The Sema domain occupies K27–L515. N-linked (GlcNAc...) asparagine glycosylation occurs at N45. 4 cysteine pairs are disulfide-bonded: C95-C101, C98-C160, C133-C141, and C172-C175. N-linked (GlcNAc...) asparagine glycosylation is present at N106. N202 and N358 each carry an N-linked (GlcNAc...) asparagine glycan. Disulfide bonds link C298–C363 and C385–C397. N-linked (GlcNAc...) asparagine glycosylation is found at N399, N405, and N449. Cystine bridges form between C520–C538, C526–C561, C529–C545, and C541–C551. Residue N553 is glycosylated (N-linked (GlcNAc...) asparagine). 3 consecutive IPT/TIG domains span residues P563–V655, P657–R739, and P742–V836. Residue T582 is glycosylated (O-linked (Man) threonine). N-linked (GlcNAc...) asparagine glycans are attached at residues N607 and N635. T676 and T761 each carry an O-linked (Man) threonine glycan. N-linked (GlcNAc...) asparagine glycans are attached at residues N785, N879, and N930. A helical membrane pass occupies residues I935 to L955. Over K956–T1381 the chain is Cytoplasmic. S966 carries the post-translational modification Phosphoserine. T977 is subject to Phosphothreonine. Phosphoserine occurs at positions 990, 997, and 1000. Y1003 is modified (phosphotyrosine). A Protein kinase domain is found at V1078–I1345. Residues I1084–V1092 and K1110 contribute to the ATP site. D1204 acts as the Proton acceptor in catalysis. The segment at L1212–T1381 is interaction with RANBP9. Y1230 carries the phosphotyrosine modification. 2 positions are modified to phosphotyrosine; by autocatalysis: Y1234 and Y1235. T1289 is modified (phosphothreonine). Positions W1320–V1359 are interaction with MUC20. Y1349 and Y1356 each carry phosphotyrosine; by autocatalysis. Y1365 bears the Phosphotyrosine mark.

It belongs to the protein kinase superfamily. Tyr protein kinase family. In terms of assembly, heterodimer made of an alpha chain (50 kDa) and a beta chain (145 kDa) which are disulfide linked. Binds PLXNB1. Interacts when phosphorylated with downstream effectors including STAT3, PIK3R1, SRC, PCLG1, GRB2 and GAB1. Interacts with SPSB1, SPSB2 and SPSB4. Interacts with INPP5D/SHIP1. When phosphorylated at Tyr-1356, interacts with INPPL1/SHIP2. Interacts with RANBP9 and RANBP10, as well as SPSB1, SPSB2, SPSB3 and SPSB4. SPSB1 binding occurs in the presence and in the absence of HGF, however HGF treatment has a positive effect on this interaction. Interacts with MUC20; prevents interaction with GRB2 and suppresses hepatocyte growth factor-induced cell proliferation. Interacts with GRB10. Interacts with PTPN1 and PTPN2. Interacts with HSP90AA1 and HSP90AB1; the interaction suppresses MET kinase activity. Interacts with tensin TNS3. Interacts (when phosphorylated) with tensin TNS4 (via SH2 domain); the interaction increases MET protein stability by inhibiting MET endocytosis and subsequent lysosomal degradation. Autophosphorylated in response to ligand binding on Tyr-1234 and Tyr-1235 in the kinase domain leading to further phosphorylation of Tyr-1349 and Tyr-1356 in the C-terminal multifunctional docking site. Dephosphorylated by PTPRJ at Tyr-1349 and Tyr-1365. Dephosphorylated by PTPN1 and PTPN2. Post-translationally, ubiquitinated. Ubiquitination by CBL regulates the receptor stability and activity through proteasomal degradation. In terms of processing, O-mannosylation of IPT/TIG domains by TMEM260 is required for protein maturation. O-mannosylated residues are composed of single mannose glycans that are not elongated or modified.

It localises to the membrane. The enzyme catalyses L-tyrosyl-[protein] + ATP = O-phospho-L-tyrosyl-[protein] + ADP + H(+). With respect to regulation, in its inactive state, the C-terminal tail interacts with the catalytic domain and inhibits the kinase activity. Upon ligand binding, the C-terminal tail is displaced and becomes phosphorylated, thus increasing the kinase activity. In terms of biological role, receptor tyrosine kinase that transduces signals from the extracellular matrix into the cytoplasm by binding to hepatocyte growth factor/HGF ligand. Regulates many physiological processes including proliferation, scattering, morphogenesis and survival. Ligand binding at the cell surface induces autophosphorylation of MET on its intracellular domain that provides docking sites for downstream signaling molecules. Following activation by ligand, interacts with the PI3-kinase subunit PIK3R1, PLCG1, SRC, GRB2, STAT3 or the adapter GAB1. Recruitment of these downstream effectors by MET leads to the activation of several signaling cascades including the RAS-ERK, PI3 kinase-AKT, or PLCgamma-PKC. The RAS-ERK activation is associated with the morphogenetic effects while PI3K/AKT coordinates prosurvival effects. During embryonic development, MET signaling plays a role in gastrulation, development and migration of muscles and neuronal precursors, angiogenesis and kidney formation. In adults, participates in wound healing as well as organ regeneration and tissue remodeling. Also promotes differentiation and proliferation of hematopoietic cells. In Equus caballus (Horse), this protein is Hepatocyte growth factor receptor (MET).